A 436-amino-acid chain; its full sequence is Gamma-glutamyl phosphate reductase (436 aa).

Belongs to the gamma-glutamyl phosphate reductase family.

It localises to the cytoplasm. The enzyme catalyses L-glutamate 5-semialdehyde + phosphate + NADP(+) = L-glutamyl 5-phosphate + NADPH + H(+). The protein operates within amino-acid biosynthesis; L-proline biosynthesis; L-glutamate 5-semialdehyde from L-glutamate: step 2/2. Its function is as follows. Catalyzes the NADPH-dependent reduction of L-glutamate 5-phosphate into L-glutamate 5-semialdehyde and phosphate. The product spontaneously undergoes cyclization to form 1-pyrroline-5-carboxylate. This chain is Gamma-glutamyl phosphate reductase, found in Prochlorococcus marinus (strain AS9601).